A 333-amino-acid chain; its full sequence is Bacteriocin helveticin-J (333 aa).

In terms of biological role, this heat-sensitive bacteriocin inhibits the growth of closely related Lactobacillus species. This chain is Bacteriocin helveticin-J (hlv), found in Lactobacillus helveticus (Lactobacillus suntoryeus).